Consider the following 337-residue polypeptide: UDP-3-O-acylglucosamine N-acyltransferase 2 (337 aa).

The Proton acceptor role is filled by histidine 238.

Belongs to the transferase hexapeptide repeat family. LpxD subfamily. In terms of assembly, homotrimer.

It carries out the reaction a UDP-3-O-[(3R)-3-hydroxyacyl]-alpha-D-glucosamine + a (3R)-hydroxyacyl-[ACP] = a UDP-2-N,3-O-bis[(3R)-3-hydroxyacyl]-alpha-D-glucosamine + holo-[ACP] + H(+). It functions in the pathway bacterial outer membrane biogenesis; LPS lipid A biosynthesis. In terms of biological role, catalyzes the N-acylation of UDP-3-O-acylglucosamine using 3-hydroxyacyl-ACP as the acyl donor. Is involved in the biosynthesis of lipid A, a phosphorylated glycolipid that anchors the lipopolysaccharide to the outer membrane of the cell. The chain is UDP-3-O-acylglucosamine N-acyltransferase 2 from Francisella tularensis subsp. tularensis (strain FSC 198).